The chain runs to 373 residues: Flagellar P-ring protein (373 aa).

The first 30 residues, 1–30 (MTNRWSFDVKKNLVTLILTWLCLSISTAQA), serve as a signal peptide directing secretion.

The protein belongs to the FlgI family. In terms of assembly, the basal body constitutes a major portion of the flagellar organelle and consists of four rings (L,P,S, and M) mounted on a central rod.

It is found in the periplasm. The protein localises to the bacterial flagellum basal body. Its function is as follows. Assembles around the rod to form the L-ring and probably protects the motor/basal body from shearing forces during rotation. This Aliivibrio salmonicida (strain LFI1238) (Vibrio salmonicida (strain LFI1238)) protein is Flagellar P-ring protein.